We begin with the raw amino-acid sequence, 423 residues long: F-box/LRR-repeat protein 2 (423 aa).

The F-box domain maps to 9-55; sequence GRINKKLPKELLLRIFSFLDIVTLCRCAQISKAWNILALDGSNWQRI. 13 LRR repeats span residues 61 to 87, 88 to 113, 114 to 139, 140 to 165, 166 to 191, 192 to 217, 218 to 243, 244 to 269, 270 to 295, 296 to 321, 322 to 350, 351 to 375, and 376 to 401; these read QTDV…SLRG, CIGV…NLNG, CTKI…DLTS, CVSI…NLSW, CDQI…LLRG, CTQL…NLQS, CSRI…CLSG, CSNL…EAAR, CSHL…DLEE, CILI…SLSH, CELI…ELDN, CLLI…ELYD, and CQQV…AYFA. Residues 80–90 form an interaction with Calmodulin region; that stretch reads LRKLSLRGCIG. K201 participates in a covalent cross-link: Glycyl lysine isopeptide (Lys-Gly) (interchain with G-Cter in ubiquitin). T404 carries the phosphothreonine modification. Residue C420 is the site of S-geranylgeranyl cysteine attachment. The CAAX motif motif lies at 420–423; it reads CVIL.

In terms of assembly, part of the SCF (SKP1-CUL1-F-box) E3 ubiquitin-protein ligase complex SCF(FBXL2) composed of CUL1, SKP1, RBX1 and FBXL2. Interacts with calmodulin; may antagonize substrate ubiquitination by SCF(FBXL2). May interact with PIK3R1. Interacts with PTPN13. In terms of processing, phosphorylated by GSK-beta (GSK3B), promoting recognition by FBXO3, leading to its ubiquitination by the SCF(FBXO3) complex. Post-translationally, ubiquitinated at Lys-201 by the SCF(FBXO3) complex in response to lipopolysaccharide (LPS), leading to its degradation by the proteasome.

The protein resides in the membrane. It functions in the pathway protein modification; protein ubiquitination. Calcium-activated substrate recognition component of the SCF (SKP1-cullin-F-box protein) E3 ubiquitin-protein ligase complex, SCF(FBXL2), which mediates the ubiquitination and subsequent proteasomal degradation of target proteins. Unlike many F-box proteins, FBXL2 does not seem to target phosphodegron within its substrates but rather calmodulin-binding motifs and is thereby antagonized by calmodulin. This is the case for the cyclins CCND2 and CCND3 which polyubiquitination and subsequent degradation are inhibited by calmodulin. Through CCND2 and CCND3 degradation induces cell-cycle arrest in G(0). SCF(FBXL2) also mediates PIK3R2 ubiquitination and proteasomal degradation thereby regulating phosphatidylinositol 3-kinase signaling and autophagy. PCYT1A monoubiquitination by SCF(FBXL2) and subsequent degradation regulates synthesis of phosphatidylcholine, which is utilized for formation of membranes and of pulmonary surfactant. The SCF(FBXL2) complex acts as a regulator of inflammation by mediating ubiquitination and degradation of TRAF proteins (TRAF1, TRAF2, TRAF3, TRAF4, TRAF5 and TRAF6). The SCF(FBXL2) complex acts as a negative regulator of the NLRP3 inflammasome by mediating ubiquitination and degradation of NLRP3. The protein is F-box/LRR-repeat protein 2 of Pongo abelii (Sumatran orangutan).